The following is a 460-amino-acid chain: GTPase Der (460 aa).

EngA-type G domains lie at 3–167 and 189–364; these read FTIA…PEPT and IRVA…AIWN. GTP is bound by residues 9–16, 56–60, 119–122, 195–202, 242–246, and 307–310; these read GRPNVGKS, DTAGL, NKSE, GRPNAGKS, and NKWD. The 85-residue stretch at 365–449 folds into the KH-like domain; sequence RRVPTAALNR…PIRITLREKA (85 aa).

Belongs to the TRAFAC class TrmE-Era-EngA-EngB-Septin-like GTPase superfamily. EngA (Der) GTPase family. Associates with the 50S ribosomal subunit.

GTPase that plays an essential role in the late steps of ribosome biogenesis. This is GTPase Der from Nitrobacter hamburgensis (strain DSM 10229 / NCIMB 13809 / X14).